The chain runs to 89 residues: Small ribosomal subunit protein uS15 (89 aa).

Belongs to the universal ribosomal protein uS15 family. In terms of assembly, part of the 30S ribosomal subunit. Forms a bridge to the 50S subunit in the 70S ribosome, contacting the 23S rRNA.

Its function is as follows. One of the primary rRNA binding proteins, it binds directly to 16S rRNA where it helps nucleate assembly of the platform of the 30S subunit by binding and bridging several RNA helices of the 16S rRNA. Functionally, forms an intersubunit bridge (bridge B4) with the 23S rRNA of the 50S subunit in the ribosome. The chain is Small ribosomal subunit protein uS15 from Neisseria gonorrhoeae (strain ATCC 700825 / FA 1090).